The sequence spans 276 residues: Large ribosomal subunit protein uL2 (276 aa).

The tract at residues 219-276 is disordered; that stretch reads TVRGSAMNPNDHPHGGGEGRTSIGRPAPVTPWGKPALGYKTRDSKKASNKMIVSRRKK.

It belongs to the universal ribosomal protein uL2 family. In terms of assembly, part of the 50S ribosomal subunit. Forms a bridge to the 30S subunit in the 70S ribosome.

In terms of biological role, one of the primary rRNA binding proteins. Required for association of the 30S and 50S subunits to form the 70S ribosome, for tRNA binding and peptide bond formation. It has been suggested to have peptidyltransferase activity; this is somewhat controversial. Makes several contacts with the 16S rRNA in the 70S ribosome. This Alkaliphilus oremlandii (strain OhILAs) (Clostridium oremlandii (strain OhILAs)) protein is Large ribosomal subunit protein uL2.